Reading from the N-terminus, the 340-residue chain is 3-isopropylmalate dehydrogenase (340 aa).

Substrate contacts are provided by arginine 88, arginine 98, arginine 122, and aspartate 212. Positions 212, 236, and 240 each coordinate Mg(2+). 272–284 (GSAPDIMGKGIAD) provides a ligand contact to NAD(+).

The protein belongs to the isocitrate and isopropylmalate dehydrogenases family. LeuB type 2 subfamily. In terms of assembly, homodimer. Mg(2+) serves as cofactor. Requires Mn(2+) as cofactor.

It localises to the cytoplasm. It carries out the reaction (2R,3S)-3-isopropylmalate + NAD(+) = 4-methyl-2-oxopentanoate + CO2 + NADH. The protein operates within amino-acid biosynthesis; L-leucine biosynthesis; L-leucine from 3-methyl-2-oxobutanoate: step 3/4. In terms of biological role, catalyzes the oxidation of 3-carboxy-2-hydroxy-4-methylpentanoate (3-isopropylmalate) to 3-carboxy-4-methyl-2-oxopentanoate. The product decarboxylates to 4-methyl-2 oxopentanoate. The sequence is that of 3-isopropylmalate dehydrogenase from Corynebacterium efficiens (strain DSM 44549 / YS-314 / AJ 12310 / JCM 11189 / NBRC 100395).